We begin with the raw amino-acid sequence, 1500 residues long: Alpha-1-macroglobulin (1500 aa).

The first 24 residues, 1 to 24 (MRRNQLPIPVFLLLLLLLPRDATA), serve as a signal peptide directing secretion. Cysteines 48 and 86 form a disulfide. N55, N61, and N157 each carry an N-linked (GlcNAc...) asparagine glycan. Cystine bridges form between C249–C298 and C267–C286. 2 N-linked (GlcNAc...) asparagine glycosylation sites follow: N382 and N412. A disulfide bridge connects residues C469 and C562. The N-linked (GlcNAc...) asparagine glycan is linked to N568. Intrachain disulfides connect C594–C785, C642–C689, C835–C863, C861–C897, C935–C1344, and C1094–C1142. The interval 686–746 (PRYCPMYQAY…QEVEVRETVR (61 aa)) is bait region. Residues N883 and N944 are each glycosylated (N-linked (GlcNAc...) asparagine). A cross-link (isoglutamyl cysteine thioester (Cys-Gln)) is located at residues 986–989 (CGEQ). N-linked (GlcNAc...) asparagine glycosylation occurs at N1005. The receptor-binding domain stretch occupies residues 1360–1500 (EGEAPFTLKV…FSSDSEQGNA (141 aa)). N-linked (GlcNAc...) asparagine glycans are attached at residues N1390 and N1448.

The protein belongs to the protease inhibitor I39 (alpha-2-macroglobulin) family. Homotetramer; disulfide-linked. Widely expressed. Highest level in ovary, testis, uterus and prostate. Protein found in plasma.

Its subcellular location is the secreted. In terms of biological role, is able to inhibit all four classes of proteinases by a unique 'trapping' mechanism. This protein has a peptide stretch, called the 'bait region' which contains specific cleavage sites for different proteinases. When a proteinase cleaves the bait region, a conformational change is induced in the protein which traps the proteinase. The entrapped enzyme remains active against low molecular weight substrates (activity against high molecular weight substrates is greatly reduced). Following cleavage in the bait region a thioester bond is hydrolyzed and mediates the covalent binding of the protein to the proteinase. The chain is Alpha-1-macroglobulin from Rattus norvegicus (Rat).